Reading from the N-terminus, the 198-residue chain is MSFLEGGVDEAGRGPVVGPMVIAVVVGDGGVLARLGVRDSKRLSPERRERLYQLILEAADCVNYVVVEPAVVDTYVWRGLLNALELDYTAKLIELCPADVYYVDSPDVDPRRYGSALEFITGRRVVAMHKGESVPQVAAASIVAKVVRDRLVALLKKEVGDFGSGYPSDPRTREWLKWGRLPPECVRWSWRTLRGESP.

The RNase H type-2 domain occupies 3-198 (FLEGGVDEAG…SWRTLRGESP (196 aa)). 3 residues coordinate a divalent metal cation: aspartate 9, glutamate 10, and aspartate 104.

The protein belongs to the RNase HII family. Mn(2+) is required as a cofactor. Requires Mg(2+) as cofactor.

It localises to the cytoplasm. It carries out the reaction Endonucleolytic cleavage to 5'-phosphomonoester.. In terms of biological role, endonuclease that specifically degrades the RNA of RNA-DNA hybrids. In Pyrobaculum neutrophilum (strain DSM 2338 / JCM 9278 / NBRC 100436 / V24Sta) (Thermoproteus neutrophilus), this protein is Ribonuclease HII.